A 201-amino-acid chain; its full sequence is LexA repressor (201 aa).

The segment at residues 28 to 48 is a DNA-binding region (H-T-H motif); the sequence is LREIGGHLGINGTLGVMKHLD. Active-site for autocatalytic cleavage activity residues include Ser120 and Lys157.

This sequence belongs to the peptidase S24 family. As to quaternary structure, homodimer.

It catalyses the reaction Hydrolysis of Ala-|-Gly bond in repressor LexA.. In terms of biological role, represses a number of genes involved in the response to DNA damage (SOS response), including recA and lexA. In the presence of single-stranded DNA, RecA interacts with LexA causing an autocatalytic cleavage which disrupts the DNA-binding part of LexA, leading to derepression of the SOS regulon and eventually DNA repair. This is LexA repressor from Geotalea uraniireducens (strain Rf4) (Geobacter uraniireducens).